The chain runs to 288 residues: ATP synthase gamma chain (288 aa).

The protein belongs to the ATPase gamma chain family. F-type ATPases have 2 components, CF(1) - the catalytic core - and CF(0) - the membrane proton channel. CF(1) has five subunits: alpha(3), beta(3), gamma(1), delta(1), epsilon(1). CF(0) has three main subunits: a, b and c.

The protein resides in the cell membrane. Produces ATP from ADP in the presence of a proton gradient across the membrane. The gamma chain is believed to be important in regulating ATPase activity and the flow of protons through the CF(0) complex. The chain is ATP synthase gamma chain from Symbiobacterium thermophilum (strain DSM 24528 / JCM 14929 / IAM 14863 / T).